The sequence spans 282 residues: DNA-binding transcriptional repressor YiaJ (282 aa).

Residues 1–20 (MGKEVMGKKENEMAQEKERP) are compositionally biased toward basic and acidic residues. The interval 1 to 21 (MGKEVMGKKENEMAQEKERPA) is disordered. In terms of domain architecture, HTH iclR-type spans 23–85 (SQSLFRGLML…PAAGSYRLTT (63 aa)). Positions 45 to 64 (LAHLSELAGLNKSTVHRLLQ) form a DNA-binding region, H-T-H motif. The IclR-ED domain maps to 100 to 272 (IIHIAAPHLE…AQAISNELGF (173 aa)).

Negatively controls the transcription of the yiaKLMNOPQRS operon, which may be involved in the utilization of 2,3-diketo-L-gulonate. The polypeptide is DNA-binding transcriptional repressor YiaJ (yiaJ) (Escherichia coli (strain K12)).